A 211-amino-acid polypeptide reads, in one-letter code: ATP phosphoribosyltransferase (211 aa).

Belongs to the ATP phosphoribosyltransferase family. Short subfamily. Heteromultimer composed of HisG and HisZ subunits.

It localises to the cytoplasm. The catalysed reaction is 1-(5-phospho-beta-D-ribosyl)-ATP + diphosphate = 5-phospho-alpha-D-ribose 1-diphosphate + ATP. The protein operates within amino-acid biosynthesis; L-histidine biosynthesis; L-histidine from 5-phospho-alpha-D-ribose 1-diphosphate: step 1/9. In terms of biological role, catalyzes the condensation of ATP and 5-phosphoribose 1-diphosphate to form N'-(5'-phosphoribosyl)-ATP (PR-ATP). Has a crucial role in the pathway because the rate of histidine biosynthesis seems to be controlled primarily by regulation of HisG enzymatic activity. In Bacillus thuringiensis subsp. konkukian (strain 97-27), this protein is ATP phosphoribosyltransferase.